The primary structure comprises 610 residues: Propanediol dehydratase-reactivating factor large subunit (610 aa).

11 to 13 serves as a coordination point for ATP; that stretch reads NSS. Mg(2+) contacts are provided by Thr-105, Asp-166, and Asp-183. ATP-binding positions include 459 to 462, 557 to 558, and Arg-591; these read EEIK and GS.

It belongs to the DdrA/PduG family. As to quaternary structure, forms a heterotetramer PduG(2)/PduH(2). Requires Mg(2+) as cofactor.

The protein resides in the bacterial microcompartment. The enzyme catalyses ATP + H2O = ADP + phosphate + H(+). Its pathway is polyol metabolism; 1,2-propanediol degradation. In terms of biological role, large subunit of the propanediol dehydratase-reactivating factor (DDR), which reactivates suicidally inhibited adenosylcobalamin-dependent propanediol dehydratase (diol dehydratase, DDH) found in the bacterial microcompartment (BMC) dedicated to 1,2-propanediol (1,2-PD) degradation. Reactivates inactivated DDH in the presence of ATP, Mg(2+) and free adenosylcobalamin (AdoCbl), by mediating the exchange of the tightly bound damaged cofactor AdoCbl for a free intact one. This subunit contains the adenosine nucleotide binding site. Its function is as follows. The 1,2-PD-specific bacterial microcompartment (BMC) concentrates low levels of 1,2-PD catabolic enzymes, concentrates volatile reaction intermediates thus enhancing pathway flux and keeps the level of toxic, mutagenic propionaldehyde low. This is Propanediol dehydratase-reactivating factor large subunit from Salmonella typhimurium (strain LT2 / SGSC1412 / ATCC 700720).